The sequence spans 420 residues: Gamma-glutamyl phosphate reductase (420 aa).

This sequence belongs to the gamma-glutamyl phosphate reductase family.

It is found in the cytoplasm. It carries out the reaction L-glutamate 5-semialdehyde + phosphate + NADP(+) = L-glutamyl 5-phosphate + NADPH + H(+). It functions in the pathway amino-acid biosynthesis; L-proline biosynthesis; L-glutamate 5-semialdehyde from L-glutamate: step 2/2. Its function is as follows. Catalyzes the NADPH-dependent reduction of L-glutamate 5-phosphate into L-glutamate 5-semialdehyde and phosphate. The product spontaneously undergoes cyclization to form 1-pyrroline-5-carboxylate. The polypeptide is Gamma-glutamyl phosphate reductase (Streptococcus pneumoniae serotype 19F (strain G54)).